Here is a 263-residue protein sequence, read N- to C-terminus: Large ribosomal subunit protein uL23m (263 aa).

Residues 1 to 45 (MPRLTVGTKNMLYPLQKTLAVGSCKPEQVPIRSLASVVESSSKIL) constitute a mitochondrion transit peptide.

The protein belongs to the universal ribosomal protein uL23 family. As to quaternary structure, component of the mitochondrial large ribosomal subunit (mt-LSU). Mature yeast 74S mitochondrial ribosomes consist of a small (37S) and a large (54S) subunit. The 37S small subunit contains a 15S ribosomal RNA (15S mt-rRNA) and 34 different proteins. The 54S large subunit contains a 21S rRNA (21S mt-rRNA) and 46 different proteins. uL23m forms the wall of the exit tunnel. Interacts with the C-terminus of OXA1.

The protein resides in the mitochondrion. Component of the mitochondrial ribosome (mitoribosome), a dedicated translation machinery responsible for the synthesis of mitochondrial genome-encoded proteins, including at least some of the essential transmembrane subunits of the mitochondrial respiratory chain. The mitoribosomes are attached to the mitochondrial inner membrane and translation products are cotranslationally integrated into the membrane. The protein is Large ribosomal subunit protein uL23m (MRP20) of Saccharomyces cerevisiae (strain ATCC 204508 / S288c) (Baker's yeast).